We begin with the raw amino-acid sequence, 395 residues long: Dual specificity mitogen-activated protein kinase kinase 1 (395 aa).

The disordered stretch occupies residues 1-24 (MPKKKPTPIQLNPNPEGTAVNGTP). The span at 9-24 (IQLNPNPEGTAVNGTP) shows a compositional bias: polar residues. The region spanning 68–363 (FEKVSELGAG…LKQLMVHSFI (296 aa)) is the Protein kinase domain. ATP is bound by residues 74-82 (LGAGNGGVV) and lysine 97. Aspartate 190 (proton acceptor) is an active-site residue. Phosphoserine; by RAF occurs at positions 218 and 222. The disordered stretch occupies residues 284-305 (ASSELAPRPRPPGRPISSYGPD).

It belongs to the protein kinase superfamily. STE Ser/Thr protein kinase family. MAP kinase kinase subfamily. In terms of processing, activated by phosphorylation on Ser/Thr catalyzed by MAP kinase kinase kinases (RAF or MOS). In terms of tissue distribution, expressed in the central nervous system, kidney, liver, intestine and the hematopoietic system.

The protein localises to the cytoplasm. It is found in the cytoskeleton. Its subcellular location is the microtubule organizing center. The protein resides in the centrosome. It localises to the spindle pole body. The protein localises to the nucleus. It carries out the reaction L-seryl-[protein] + ATP = O-phospho-L-seryl-[protein] + ADP + H(+). The enzyme catalyses L-threonyl-[protein] + ATP = O-phospho-L-threonyl-[protein] + ADP + H(+). The catalysed reaction is L-tyrosyl-[protein] + ATP = O-phospho-L-tyrosyl-[protein] + ADP + H(+). Its function is as follows. Dual specificity protein kinase which acts as an essential component of the MAP kinase signal transduction pathway. Binding of extracellular ligands such as growth factors, cytokines and hormones to their cell-surface receptors activates the MAPK/ERK cascade, ultimately leading to phosphorylation of a threonine and a tyrosine residue in a Thr-Glu-Tyr sequence located in MAP kinases. Depending on the cellular context, this pathway mediates diverse biological functions such as cell growth, adhesion, survival and differentiation predominantly through the regulation of transcription, metabolism and cytoskeletal rearrangements. In Xenopus laevis (African clawed frog), this protein is Dual specificity mitogen-activated protein kinase kinase 1 (map2k1).